A 749-amino-acid chain; its full sequence is uncharacterized protein (749 aa).

Residues 63–243 (FQYVQKGESI…QLTGKPMRLV (181 aa)) enclose the Helicase ATP-binding domain. 76 to 83 (TPTASGKT) provides a ligand contact to ATP. The DEVH box signature appears at 185–188 (DELH). A Helicase C-terminal domain is found at 276-430 (EVNELAKEFL…SARINPENLI (155 aa)).

Belongs to the helicase family.

This is an uncharacterized protein from Bacillus subtilis (strain 168).